The primary structure comprises 454 residues: Maintenance of mitochondrial morphology protein 1 (454 aa).

The Lumenal portion of the chain corresponds to 1–128; it reads MSMVIGIGDL…QSSGWGFAHG (128 aa). Residues 129–149 form a helical membrane-spanning segment; the sequence is LLVGQLSVVAVLAFFIKFFIF. Topologically, residues 150–454 are cytoplasmic; it reads GNSSMARPLM…SESETAVDSN (305 aa). The SMP-LTD domain maps to 207 to 430; it reads QSESLDWFNV…EPRFQLIELP (224 aa).

It belongs to the MMM1 family. As to quaternary structure, homodimer. Component of the ER-mitochondria encounter structure (ERMES) or MDM complex, composed of MMM1, MDM10, MDM12 and MDM34. An MMM1 homodimer associates with one molecule of MDM12 on each side in a pairwise head-to-tail manner, and the SMP-LTD domains of MMM1 and MDM12 generate a continuous hydrophobic tunnel for phospholipid trafficking.

Its subcellular location is the endoplasmic reticulum membrane. In terms of biological role, component of the ERMES/MDM complex, which serves as a molecular tether to connect the endoplasmic reticulum (ER) and mitochondria. Components of this complex are involved in the control of mitochondrial shape and protein biogenesis, and function in nonvesicular lipid trafficking between the ER and mitochondria. The MDM12-MMM1 subcomplex functions in the major beta-barrel assembly pathway that is responsible for biogenesis of all outer membrane beta-barrel proteins, and acts in a late step after the SAM complex. The MDM10-MDM12-MMM1 subcomplex further acts in the TOM40-specific pathway after the action of the MDM12-MMM1 complex. Essential for establishing and maintaining the structure of mitochondria and maintenance of mtDNA nucleoids. The sequence is that of Maintenance of mitochondrial morphology protein 1 from Komagataella phaffii (strain GS115 / ATCC 20864) (Yeast).